The chain runs to 46 residues: Protein PsbN (46 aa).

The helical transmembrane segment at 10–30 threads the bilayer; it reads VAIAVLAALLGLTGFGVYTAF.

This sequence belongs to the PsbN family.

It localises to the cellular thylakoid membrane. Functionally, may play a role in photosystem I and II biogenesis. This is Protein PsbN from Synechococcus sp. (strain CC9311).